A 463-amino-acid polypeptide reads, in one-letter code: Chromosomal replication initiator protein DnaA (463 aa).

Residues 1-83 (MSTNQIILTD…LQLFQHYNNT (83 aa)) form a domain I, interacts with DnaA modulators region. Positions 83–124 (TIKSIEIITKELPGTTQTVTELPTKTFADIGSSELNSENIFS) are domain II. A domain III, AAA+ region region spans residues 125–343 (TLDARFTFDN…GALNKVIAHS (219 aa)). Positions 171, 173, 174, and 175 each coordinate ATP. A domain IV, binds dsDNA region spans residues 344–463 (NFTLKEITLE…INLLMKILQN (120 aa)).

This sequence belongs to the DnaA family. Oligomerizes as a right-handed, spiral filament on DNA at oriC.

It localises to the cytoplasm. Functionally, plays an essential role in the initiation and regulation of chromosomal replication. ATP-DnaA binds to the origin of replication (oriC) to initiate formation of the DNA replication initiation complex once per cell cycle. Binds the DnaA box (a 9 base pair repeat at the origin) and separates the double-stranded (ds)DNA. Forms a right-handed helical filament on oriC DNA; dsDNA binds to the exterior of the filament while single-stranded (ss)DNA is stabiized in the filament's interior. The ATP-DnaA-oriC complex binds and stabilizes one strand of the AT-rich DNA unwinding element (DUE), permitting loading of DNA polymerase. After initiation quickly degrades to an ADP-DnaA complex that is not apt for DNA replication. Binds acidic phospholipids. This Rickettsia peacockii (strain Rustic) protein is Chromosomal replication initiator protein DnaA.